We begin with the raw amino-acid sequence, 264 residues long: UPF0162 protein PM0557 (264 aa).

Belongs to the UPF0162 family.

The protein is UPF0162 protein PM0557 of Pasteurella multocida (strain Pm70).